Consider the following 362-residue polypeptide: Chorismate synthase (362 aa).

An NADP(+)-binding site is contributed by Arg-48. Residues 131-133, 243-244, Gly-288, 303-307, and Arg-329 contribute to the FMN site; these read RAS, NA, and KPTSS.

It belongs to the chorismate synthase family. In terms of assembly, homotetramer. FMNH2 is required as a cofactor.

The catalysed reaction is 5-O-(1-carboxyvinyl)-3-phosphoshikimate = chorismate + phosphate. It functions in the pathway metabolic intermediate biosynthesis; chorismate biosynthesis; chorismate from D-erythrose 4-phosphate and phosphoenolpyruvate: step 7/7. In terms of biological role, catalyzes the anti-1,4-elimination of the C-3 phosphate and the C-6 proR hydrogen from 5-enolpyruvylshikimate-3-phosphate (EPSP) to yield chorismate, which is the branch point compound that serves as the starting substrate for the three terminal pathways of aromatic amino acid biosynthesis. This reaction introduces a second double bond into the aromatic ring system. In Bartonella tribocorum (strain CIP 105476 / IBS 506), this protein is Chorismate synthase.